The following is a 204-amino-acid chain: Thymidylate kinase (204 aa).

9-16 provides a ligand contact to ATP; sequence GLDGAGKS.

It belongs to the thymidylate kinase family.

The enzyme catalyses dTMP + ATP = dTDP + ADP. Functionally, phosphorylation of dTMP to form dTDP in both de novo and salvage pathways of dTTP synthesis. The polypeptide is Thymidylate kinase (Francisella philomiragia subsp. philomiragia (strain ATCC 25017 / CCUG 19701 / FSC 153 / O#319-036)).